Here is a 1387-residue protein sequence, read N- to C-terminus: Regulator of G-protein signaling 12 (1387 aa).

The 77-residue stretch at 21–97 folds into the PDZ domain; that stretch reads SVEVARGRAG…GVLRMVISEG (77 aa). A phosphoserine mark is found at Ser171 and Ser194. Residue Lys195 forms a Glycyl lysine isopeptide (Lys-Gly) (interchain with G-Cter in SUMO2) linkage. Residues 227–339 form the PID domain; sequence VAMVVGYLGS…GALRTSCHVF (113 aa). Disordered regions lie at residues 409–428 and 442–488; these read ADAH…IGNF and LGGG…PLET. The span at 412 to 428 shows a compositional bias: polar residues; that stretch reads HQNNSTSSNSDSGIGNF. Residues Arg524 and Arg633 each carry the omega-N-methylarginine modification. The segment at 620–650 is disordered; it reads RKTKEDKKSSKLGRGVALAQTSQRTSARRSF. Phosphoserine is present on residues Ser661 and Ser671. In terms of domain architecture, RGS spans 715 to 832; it reads SFERLLQDPV…LKSQLYQECV (118 aa). The disordered stretch occupies residues 842-934; that stretch reads PDSQQVPSSP…ANGGLCRRES (93 aa). Residues 849–869 show a composition bias toward low complexity; sequence SSPASKHSISSDHSNVSTPKK. Residues Ser850 and Ser879 each carry the phosphoserine modification. Residues 914–923 are compositionally biased toward basic and acidic residues; sequence DHGDHAHDAL. Ser943 is modified (phosphoserine). RBD domains lie at 962–1032 and 1034–1104; these read KHCC…LGKR and LFRL…LEER. A compositionally biased stretch (basic and acidic residues) spans 1103-1117; sequence ERDPSRGKVSTEKQK. The segment at 1103–1168 is disordered; sequence ERDPSRGKVS…ARDPRLSKRE (66 aa). The segment covering 1122-1133 has biased composition (polar residues); the sequence is KQSSAVNSSPRN. The segment covering 1151–1168 has biased composition (basic and acidic residues); the sequence is IRGENGKSARDPRLSKRE. The GoLoco domain maps to 1187 to 1209; the sequence is AEEFFELISKAQSNRADDQRGLL. Disordered stretches follow at residues 1224–1325 and 1349–1387; these read PGSS…EGTT and ADLT…TSRF. Residues 1261–1280 show a composition bias toward low complexity; sequence SDSPATSPASAQSPCSAYSP. Positions 1315–1325 are enriched in polar residues; the sequence is SCISTVQEGTT. Positions 1367-1380 are enriched in pro residues; that stretch reads LPPPPLPQDTPGPT.

Interacts with GNAI1, GNAI2 and GNAI3; the interactions are GDP-dependent. As to expression, detected in brain cortex GABAergic neurons, in striatum and substantia nigra, and in the Purkinje cell layer in the cerebellum and hippocampus (at protein level). Expressed at high levels in brain and lung and lower levels in testis, heart, and spleen.

The protein localises to the nucleus. It is found in the cytoplasm. Its subcellular location is the cell projection. The protein resides in the dendrite. It localises to the synapse. Functionally, regulates G protein-coupled receptor signaling cascades. Inhibits signal transduction by increasing the GTPase activity of G protein alpha subunits, thereby driving them into their inactive GDP-bound form. The sequence is that of Regulator of G-protein signaling 12 (Rgs12) from Rattus norvegicus (Rat).